Consider the following 879-residue polypeptide: Band 4.1-like protein 1 (879 aa).

The tract at residues 1–64 (MTTETGPDSE…RPAEQSLDME (64 aa)) is disordered. Residues 17–35 (ETPQQPEAAAAVTTPVTPA) show a composition bias toward low complexity. Phosphothreonine is present on Thr30. The segment covering 38 to 50 (SHPETNSNEKHLT) has biased composition (basic and acidic residues). Ser75 is modified (phosphoserine). Thr79 is subject to Phosphothreonine. Residues 97–378 (ATCRVTLLDA…EHHTFFRLVS (282 aa)) form the FERM domain. Position 343 is a phosphotyrosine (Tyr343). Ser378, Ser430, Ser437, Ser461, and Ser466 each carry phosphoserine. The interval 428–501 (SRSLDGAEFS…HKQEFLDKPE (74 aa)) is disordered. The span at 444-501 (ENHDAGPDGDKREDDAESGGRRSEAEEGEVRTPTKIKELKPEQETTPRHKQEFLDKPE) shows a compositional bias: basic and acidic residues. Thr475 is modified (phosphothreonine). The tract at residues 483–541 (KPEQETTPRHKQEFLDKPEDVLLKHQASINELKRTLKEPNSKLIHRDRDWERERRLPSS) is spectrin--actin-binding. At Ser510 the chain carries Phosphoserine. Residues 514–538 (LKRTLKEPNSKLIHRDRDWERERRL) show a composition bias toward basic and acidic residues. Disordered regions lie at residues 514 to 596 (LKRT…FLKD), 633 to 687 (FEDF…STPE), and 718 to 742 (SRVSTADSTQVDGGAPAAKDFMTTP). Residues Ser540, Ser541, Ser544, and Ser546 each carry the phosphoserine modification. The residue at position 550 (Thr550) is a Phosphothreonine. A compositionally biased stretch (basic and acidic residues) spans 550-577 (TPEKASERAGLREGSEEKVKPPRPRAPE). 2 positions are modified to phosphoserine: Ser564 and Ser578. Thr580 is modified (phosphothreonine). Glu583, Gln587, Ser639, Ser648, Ser650, Ser665, Ser666, Asp669, Ser671, Ser677, and Ser684 each carry phosphoserine. Residues 635-650 (DFSRSLPELDRDKSDS) are compositionally biased toward basic and acidic residues. Phosphothreonine is present on Thr685. The segment covering 718-728 (SRVSTADSTQV) has biased composition (polar residues). Ser721, Pro742, Ala766, Ser782, and Ser868 each carry phosphoserine. Residues 744–879 (CITTETISTT…EERDKKPQES (136 aa)) are C-terminal (CTD).

As to quaternary structure, interacts with AGAP2. In terms of tissue distribution, highest expression in brain, lower in heart and kidney. Within the brain, highest expression in cerebellum.

Its subcellular location is the cytoplasm. The protein localises to the cytoskeleton. In terms of biological role, may function to confer stability and plasticity to neuronal membrane via multiple interactions, including the spectrin-actin-based cytoskeleton, integral membrane channels and membrane-associated guanylate kinases. In Rattus norvegicus (Rat), this protein is Band 4.1-like protein 1.